A 300-amino-acid chain; its full sequence is Tyrosine recombinase XerC (300 aa).

Positions 2 to 87 (TSLSPLLEKF…SIKSFYKYLV (86 aa)) constitute a Core-binding (CB) domain. The Tyr recombinase domain maps to 108–294 (TLPKVLPVEE…TWEQLQQVYD (187 aa)). Residues R148, K172, H246, R249, and H272 contribute to the active site. Y281 functions as the O-(3'-phospho-DNA)-tyrosine intermediate in the catalytic mechanism.

The protein belongs to the 'phage' integrase family. XerC subfamily. In terms of assembly, forms a cyclic heterotetrameric complex composed of two molecules of XerC and two molecules of XerD.

The protein localises to the cytoplasm. In terms of biological role, site-specific tyrosine recombinase, which acts by catalyzing the cutting and rejoining of the recombining DNA molecules. The XerC-XerD complex is essential to convert dimers of the bacterial chromosome into monomers to permit their segregation at cell division. It also contributes to the segregational stability of plasmids. This chain is Tyrosine recombinase XerC, found in Myxococcus xanthus.